A 158-amino-acid polypeptide reads, in one-letter code: Disease resistance response protein Pi49 (158 aa).

This sequence belongs to the BetVI family.

The chain is Disease resistance response protein Pi49 (DRR49A) from Pisum sativum (Garden pea).